A 150-amino-acid polypeptide reads, in one-letter code: Large ribosomal subunit protein uL11 (150 aa).

This sequence belongs to the universal ribosomal protein uL11 family. In terms of assembly, part of the ribosomal stalk of the 50S ribosomal subunit. Interacts with L10 and the large rRNA to form the base of the stalk. L10 forms an elongated spine to which L12 dimers bind in a sequential fashion forming a multimeric L10(L12)X complex. One or more lysine residues are methylated.

Functionally, forms part of the ribosomal stalk which helps the ribosome interact with GTP-bound translation factors. This chain is Large ribosomal subunit protein uL11, found in Cereibacter sphaeroides (strain ATCC 17025 / ATH 2.4.3) (Rhodobacter sphaeroides).